The primary structure comprises 253 residues: Pimeloyl-[acyl-carrier protein] methyl ester esterase (253 aa).

Substrate is bound by residues W18, 78–79, and 139–143; these read SL and FLALD. The active-site Nucleophile is S78. Catalysis depends on residues D203 and H231. H231 contributes to the substrate binding site.

Belongs to the AB hydrolase superfamily. Carboxylesterase BioH family. In terms of assembly, monomer.

It is found in the cytoplasm. It carries out the reaction 6-carboxyhexanoyl-[ACP] methyl ester + H2O = 6-carboxyhexanoyl-[ACP] + methanol + H(+). Its pathway is cofactor biosynthesis; biotin biosynthesis. The physiological role of BioH is to remove the methyl group introduced by BioC when the pimeloyl moiety is complete. It allows to synthesize pimeloyl-ACP via the fatty acid synthetic pathway through the hydrolysis of the ester bonds of pimeloyl-ACP esters. This is Pimeloyl-[acyl-carrier protein] methyl ester esterase from Xanthomonas campestris pv. campestris (strain 8004).